We begin with the raw amino-acid sequence, 653 residues long: Dystrotelin (653 aa).

The segment at 223 to 279 (THPVRCSVCRTFPIIGLRYHCLKCLDFDICELCFLSGLHKNSHEKSHTVMEECVQMS) adopts a ZZ-type zinc-finger fold. Cys228, Cys231, Cys243, Cys246, Cys252, Cys255, His265, and His269 together coordinate Zn(2+). A coiled-coil region spans residues 384-411 (RDSLNTLLRERRLLRKQLHRYKQKLQGT).

As to expression, strongly expressed in the nervous and muscular tissues.

It is found in the cell membrane. The protein is Dystrotelin (Dytn) of Mus musculus (Mouse).